A 244-amino-acid polypeptide reads, in one-letter code: NAD-dependent protein deacetylase (244 aa).

Positions 1–244 (MSATERQLQY…IGDTCRQLRA (244 aa)) constitute a Deacetylase sirtuin-type domain. NAD(+) is bound by residues A27, T31, F38, R39, Q107, I109, D110, and H125. A nicotinamide-binding site is contributed by F38. Residues I109 and D110 each coordinate nicotinamide. The Proton acceptor role is filled by H125. Zn(2+) contacts are provided by C133, C136, C153, and C156. The NAD(+) site is built by S192, S193, N217, and I235.

This sequence belongs to the sirtuin family. Class U subfamily. Zn(2+) serves as cofactor.

The protein localises to the cytoplasm. It catalyses the reaction N(6)-acetyl-L-lysyl-[protein] + NAD(+) + H2O = 2''-O-acetyl-ADP-D-ribose + nicotinamide + L-lysyl-[protein]. In terms of biological role, NAD-dependent protein deacetylase which modulates the activities of several enzymes which are inactive in their acetylated form. This chain is NAD-dependent protein deacetylase, found in Chromobacterium violaceum (strain ATCC 12472 / DSM 30191 / JCM 1249 / CCUG 213 / NBRC 12614 / NCIMB 9131 / NCTC 9757 / MK).